The primary structure comprises 127 residues: Mediator of RNA polymerase II transcription subunit 9 (127 aa).

The stretch at 95–119 (QKEQEIEAKKRVHRQLRQRVEEIAG) forms a coiled coil.

It belongs to the Mediator complex subunit 9 family. Component of the Mediator complex.

It localises to the nucleus. Component of the Mediator complex, a coactivator involved in the regulated transcription of nearly all RNA polymerase II-dependent genes. Mediator functions as a bridge to convey information from gene-specific regulatory proteins to the basal RNA polymerase II transcription machinery. Mediator is recruited to promoters by direct interactions with regulatory proteins and serves as a scaffold for the assembly of a functional preinitiation complex with RNA polymerase II and the general transcription factors. The protein is Mediator of RNA polymerase II transcription subunit 9 (CSE2) of Eremothecium gossypii (strain ATCC 10895 / CBS 109.51 / FGSC 9923 / NRRL Y-1056) (Yeast).